The primary structure comprises 128 residues: Ribosome-binding factor A (128 aa).

Belongs to the RbfA family. In terms of assembly, monomer. Binds 30S ribosomal subunits, but not 50S ribosomal subunits or 70S ribosomes.

The protein resides in the cytoplasm. In terms of biological role, one of several proteins that assist in the late maturation steps of the functional core of the 30S ribosomal subunit. Associates with free 30S ribosomal subunits (but not with 30S subunits that are part of 70S ribosomes or polysomes). Required for efficient processing of 16S rRNA. May interact with the 5'-terminal helix region of 16S rRNA. The protein is Ribosome-binding factor A of Acidithiobacillus ferrooxidans (strain ATCC 23270 / DSM 14882 / CIP 104768 / NCIMB 8455) (Ferrobacillus ferrooxidans (strain ATCC 23270)).